The following is a 216-amino-acid chain: Large ribosomal subunit protein uL3 (216 aa).

Over residues 133–145 (GRATHGNSRSHNV) the composition is skewed to polar residues. A disordered region spans residues 133 to 153 (GRATHGNSRSHNVPGSIGMAQ). Residue Gln-153 is modified to N5-methylglutamine.

This sequence belongs to the universal ribosomal protein uL3 family. As to quaternary structure, part of the 50S ribosomal subunit. Forms a cluster with proteins L14 and L19. Post-translationally, methylated by PrmB.

Its function is as follows. One of the primary rRNA binding proteins, it binds directly near the 3'-end of the 23S rRNA, where it nucleates assembly of the 50S subunit. This Burkholderia cenocepacia (strain ATCC BAA-245 / DSM 16553 / LMG 16656 / NCTC 13227 / J2315 / CF5610) (Burkholderia cepacia (strain J2315)) protein is Large ribosomal subunit protein uL3.